The primary structure comprises 282 residues: tRNA uridine(34) hydroxylase (282 aa).

One can recognise a Rhodanese domain in the interval 128-222 (DGRPVVMLDT…YFEEVGGSHY (95 aa)). The active-site Cysteine persulfide intermediate is Cys-182.

The protein belongs to the TrhO family.

The catalysed reaction is uridine(34) in tRNA + AH2 + O2 = 5-hydroxyuridine(34) in tRNA + A + H2O. Catalyzes oxygen-dependent 5-hydroxyuridine (ho5U) modification at position 34 in tRNAs. In Cupriavidus metallidurans (strain ATCC 43123 / DSM 2839 / NBRC 102507 / CH34) (Ralstonia metallidurans), this protein is tRNA uridine(34) hydroxylase.